Reading from the N-terminus, the 901-residue chain is Phosphatidylinositol 3-kinase catalytic subunit type 3 (901 aa).

The C2 PI3K-type domain maps to 21–189 (LQTNVQVKVA…DLLFKQVTRQ (169 aa)). Residues 302 to 527 (RHRQVKPNKQ…SKMYQNIQDR (226 aa)) form the PIK helical domain. The PI3K/PI4K catalytic domain occupies 607–886 (IPDTASFFKS…QIESSLNAKM (280 aa)). Positions 613–619 (FFKSEMM) are G-loop. The interval 755 to 763 (GLGDRHLDN) is catalytic loop. Residues 774-795 (HVDFGFILGRDPKPMPPPMKLT) are activation loop.

The protein belongs to the PI3/PI4-kinase family. As to quaternary structure, interacts with bec-1. May interact with dyn-1. Mn(2+) serves as cofactor. In terms of tissue distribution, ubiquitous.

It is found in the nucleus outer membrane. It localises to the cytoplasm. Its subcellular location is the cytoplasmic granule. The protein resides in the cell projection. The protein localises to the phagocytic cup. The catalysed reaction is a 1,2-diacyl-sn-glycero-3-phospho-(1D-myo-inositol) + ATP = a 1,2-diacyl-sn-glycero-3-phospho-(1D-myo-inositol-3-phosphate) + ADP + H(+). With respect to regulation, inhibited by wortmannin. Catalytic subunit of the PI3K complex that mediates formation of phosphatidylinositol 3-phosphate. Together with bec-1, mediates the production of phosphatidylinositol 3-phosphate on intracellular vesicles and thereby regulates membrane trafficking. Plays a role in endosome-to-Golgi retrograde transport of mig-14. Involved in clearance of apoptotic cell corpses by phagosomes. Phagosome maturation requires two sequential and non-overlapping pulses of phosphatidylinositol-3-phosphate (PI3P) on the vesicle surface which mediates recruitment of sortins snx-1 and lst-4 and small GTPases rab-5, rab-2 and rab-7, downstream of dynamin dyn-1. The first pulse is initiated by piki-1, then maintained by vps-34 which also produces the second pulse. Required for embryonic development. Together with bec-1, involved in L3/L4 larval molting stage probably by regulating cuticle shedding. Regulates the expansion of the nucleus outer membrane. Involved in the secretion and localization of lrp-1 at the apical surface of hyp7 syncytium. May regulate endocytosis in hypodermal cells. May play a role in the formation of gut granules (a lysosome-related organelle). Plays a role in germ stem cell proliferation during larval development. This Caenorhabditis elegans protein is Phosphatidylinositol 3-kinase catalytic subunit type 3.